Here is a 399-residue protein sequence, read N- to C-terminus: MSIVVENSTVLSALTEKFAEVFGDTKEVEYFFSPGRINLIGEHTDYNGGYVFPASITIGTTGLARLREDKKVKLYSENFPKLGVIEFDLDEVEKKDGELWSNYVKGMIVMLKGAGYEIDKGFELLIKGEIPTASGLSSSASLELLVGVVLDDLFNLNVPRLELVQLGQKTENDYIGVNSGILDQFAIGFGEVKKAILLDCNTLKYEMVPVELRDYDIVIMNTNKPRALTESKYNERFAETREALKRMQTRLDIQSLGELSNEEFDANTDLIGDETLIKRARHAVYENNRTKIAQKAFVAGNLTKFGELLNASHASLKDDYEVTGLELDTLAETAQKQAGVLGARMTGAGFGGCAIALVAHDNVSAFEKAVGQVYEEVVGYPASFYVAQIGSGSTKLDVE.

Residue 42–45 coordinates substrate; the sequence is EHTD. Residues Ser76 and 133–139 contribute to the ATP site; that span reads ASGLSSS. Positions 139 and 171 each coordinate Mg(2+). The active-site Proton acceptor is the Asp183. Position 233 (Tyr233) interacts with substrate.

This sequence belongs to the GHMP kinase family. GalK subfamily. Monomer.

It localises to the cytoplasm. It catalyses the reaction alpha-D-galactose + ATP = alpha-D-galactose 1-phosphate + ADP + H(+). It functions in the pathway carbohydrate metabolism; galactose metabolism. Functionally, catalyzes the transfer of the gamma-phosphate of ATP to D-galactose to form alpha-D-galactose-1-phosphate (Gal-1-P). The sequence is that of Galactokinase from Lactococcus lactis subsp. lactis (strain IL1403) (Streptococcus lactis).